Consider the following 345-residue polypeptide: D-fructose 1,6-bisphosphatase class 2/sedoheptulose 1,7-bisphosphatase (345 aa).

Mn(2+) contacts are provided by Asp33, Glu57, Asp97, and Glu100. Residues 100–102 (EGT), Tyr131, 176–178 (RPR), and 198–200 (DGD) contribute to the substrate site. Residue Glu225 participates in Mn(2+) binding.

It belongs to the FBPase class 2 family. As to quaternary structure, homotetramer. The cofactor is Mn(2+).

The catalysed reaction is beta-D-fructose 1,6-bisphosphate + H2O = beta-D-fructose 6-phosphate + phosphate. It catalyses the reaction D-sedoheptulose 1,7-bisphosphate + H2O = D-sedoheptulose 7-phosphate + phosphate. The protein operates within carbohydrate biosynthesis; Calvin cycle. Its activity is regulated as follows. Inhibited by AMP and slightly innibited by hydrogen peroxyde. Catalyzes the hydrolysis of fructose 1,6-bisphosphate (Fru 1,6-P2) and sedoheptulose 1,7-bisphosphate (Sed 1,7-P2) to fructose 6-phosphate and sedoheptulose 7-phosphate, respectively. This Synechococcus elongatus (strain ATCC 33912 / PCC 7942 / FACHB-805) (Anacystis nidulans R2) protein is D-fructose 1,6-bisphosphatase class 2/sedoheptulose 1,7-bisphosphatase.